The primary structure comprises 179 residues: uncharacterized protein (179 aa).

The region spanning 21–109 is the Rhodanese domain; that stretch reads QQDAVILVDV…WKQAGLPTVK (89 aa). 2 helical membrane-spanning segments follow: residues 115–135 and 138–158; these read ISIM…GVLL and FVAP…LFAG.

Its subcellular location is the cell membrane. This is an uncharacterized protein from Synechocystis sp. (strain ATCC 27184 / PCC 6803 / Kazusa).